The primary structure comprises 182 residues: MSFDKQNLIWIDLEMTGLDPEKERIIEIATIVTDKNLNILAEGPVLAVHQSDELLNKMNDWCQKTHSENGLIERIKASKLTERAAELQTLDFLKKWVPKGASPICGNSIAQDKRFLVKYMPDLADYFHYRHLDVSTLKELAARWKPEILEGFKKENTHLALDDIRESIKELAYYREHFMKLD.

Residues Leu-8–Leu-171 enclose the Exonuclease domain. Residue Tyr-129 is part of the active site.

Belongs to the oligoribonuclease family.

Its subcellular location is the cytoplasm. Functionally, 3'-to-5' exoribonuclease specific for small oligoribonucleotides. In Haemophilus influenzae (strain ATCC 51907 / DSM 11121 / KW20 / Rd), this protein is Oligoribonuclease (orn).